Reading from the N-terminus, the 153-residue chain is MLTQDEVSAQLGQYMLRGYTLLDTICPKCEKVPMMRLRDNPMFCVSCINDLKESDASEHVTVAESAPKIASLPISKTNDAERSQQTTKAPVMERTESSHQATLSVYSRLISELESQLDDRLPLPHNTEFLDVSLQRIERILNLISLAKSLMSS.

The tract at residues 72–98 (LPISKTNDAERSQQTTKAPVMERTESS) is disordered.

It is found in the cytoplasm. It localises to the nucleus. This is an uncharacterized protein from Schizosaccharomyces pombe (strain 972 / ATCC 24843) (Fission yeast).